The chain runs to 848 residues: Leucine--tRNA ligase (848 aa).

The 'HIGH' region signature appears at 41–51 (PYPSGRIHMGH). The 'KMSKS' region signature appears at 619-623 (KMSKS). Lysine 622 lines the ATP pocket.

Belongs to the class-I aminoacyl-tRNA synthetase family.

It is found in the cytoplasm. The enzyme catalyses tRNA(Leu) + L-leucine + ATP = L-leucyl-tRNA(Leu) + AMP + diphosphate. The chain is Leucine--tRNA ligase from Roseobacter denitrificans (strain ATCC 33942 / OCh 114) (Erythrobacter sp. (strain OCh 114)).